We begin with the raw amino-acid sequence, 156 residues long: Small ribosomal subunit protein uS7 (156 aa).

The protein belongs to the universal ribosomal protein uS7 family. As to quaternary structure, part of the 30S ribosomal subunit. Contacts proteins S9 and S11.

In terms of biological role, one of the primary rRNA binding proteins, it binds directly to 16S rRNA where it nucleates assembly of the head domain of the 30S subunit. Is located at the subunit interface close to the decoding center, probably blocks exit of the E-site tRNA. This Shewanella piezotolerans (strain WP3 / JCM 13877) protein is Small ribosomal subunit protein uS7.